A 291-amino-acid chain; its full sequence is T-cell leukemia homeobox protein 3 (291 aa).

Positions 1–51 are disordered; it reads MEAPASAQTPHPHEPISFGIDQILNSPDQDSAPAPRGPDGASYLGGPPGGR. Positions 166 to 225 form a DNA-binding region, homeobox; sequence RKKPRTSFSRVQICELEKRFHRQKYLASAERAALAKSLKMTDAQVKTWFQNRRTKWRRQT.

Its subcellular location is the nucleus. This is T-cell leukemia homeobox protein 3 (Tlx3) from Mus musculus (Mouse).